The chain runs to 68 residues: Putative membrane protein insertion efficiency factor (68 aa).

Belongs to the UPF0161 family.

It localises to the cell membrane. Could be involved in insertion of integral membrane proteins into the membrane. The polypeptide is Putative membrane protein insertion efficiency factor (Syntrophomonas wolfei subsp. wolfei (strain DSM 2245B / Goettingen)).